Reading from the N-terminus, the 207-residue chain is Pyridoxal 5'-phosphate synthase subunit PdxT (207 aa).

51–53 (GES) is an L-glutamine binding site. Cysteine 83 functions as the Nucleophile in the catalytic mechanism. L-glutamine contacts are provided by residues arginine 112 and 143-144 (IR). Catalysis depends on charge relay system residues histidine 184 and glutamate 186.

This sequence belongs to the glutaminase PdxT/SNO family. In the presence of PdxS, forms a dodecamer of heterodimers. Only shows activity in the heterodimer.

It catalyses the reaction aldehydo-D-ribose 5-phosphate + D-glyceraldehyde 3-phosphate + L-glutamine = pyridoxal 5'-phosphate + L-glutamate + phosphate + 3 H2O + H(+). The catalysed reaction is L-glutamine + H2O = L-glutamate + NH4(+). The protein operates within cofactor biosynthesis; pyridoxal 5'-phosphate biosynthesis. Its function is as follows. Catalyzes the hydrolysis of glutamine to glutamate and ammonia as part of the biosynthesis of pyridoxal 5'-phosphate. The resulting ammonia molecule is channeled to the active site of PdxS. The polypeptide is Pyridoxal 5'-phosphate synthase subunit PdxT (Kineococcus radiotolerans (strain ATCC BAA-149 / DSM 14245 / SRS30216)).